We begin with the raw amino-acid sequence, 213 residues long: Imidazole glycerol phosphate synthase subunit HisH (213 aa).

One can recognise a Glutamine amidotransferase type-1 domain in the interval serine 4–proline 213. Residue cysteine 83 is the Nucleophile of the active site. Residues histidine 193 and glutamate 195 contribute to the active site.

As to quaternary structure, heterodimer of HisH and HisF.

It localises to the cytoplasm. It catalyses the reaction 5-[(5-phospho-1-deoxy-D-ribulos-1-ylimino)methylamino]-1-(5-phospho-beta-D-ribosyl)imidazole-4-carboxamide + L-glutamine = D-erythro-1-(imidazol-4-yl)glycerol 3-phosphate + 5-amino-1-(5-phospho-beta-D-ribosyl)imidazole-4-carboxamide + L-glutamate + H(+). It carries out the reaction L-glutamine + H2O = L-glutamate + NH4(+). Its pathway is amino-acid biosynthesis; L-histidine biosynthesis; L-histidine from 5-phospho-alpha-D-ribose 1-diphosphate: step 5/9. Functionally, IGPS catalyzes the conversion of PRFAR and glutamine to IGP, AICAR and glutamate. The HisH subunit catalyzes the hydrolysis of glutamine to glutamate and ammonia as part of the synthesis of IGP and AICAR. The resulting ammonia molecule is channeled to the active site of HisF. The chain is Imidazole glycerol phosphate synthase subunit HisH from Burkholderia pseudomallei (strain K96243).